Reading from the N-terminus, the 254-residue chain is Pyrroloquinoline-quinone synthase (254 aa).

The protein belongs to the PqqC family.

The catalysed reaction is 6-(2-amino-2-carboxyethyl)-7,8-dioxo-1,2,3,4,7,8-hexahydroquinoline-2,4-dicarboxylate + 3 O2 = pyrroloquinoline quinone + 2 H2O2 + 2 H2O + H(+). Its pathway is cofactor biosynthesis; pyrroloquinoline quinone biosynthesis. Functionally, ring cyclization and eight-electron oxidation of 3a-(2-amino-2-carboxyethyl)-4,5-dioxo-4,5,6,7,8,9-hexahydroquinoline-7,9-dicarboxylic-acid to PQQ. The protein is Pyrroloquinoline-quinone synthase of Rhodopseudomonas palustris (strain ATCC BAA-98 / CGA009).